We begin with the raw amino-acid sequence, 225 residues long: Peptidyl-tRNA hydrolase (225 aa).

Position 14 (tyrosine 14) interacts with tRNA. Histidine 19 serves as the catalytic Proton acceptor. Phenylalanine 64, asparagine 66, and asparagine 112 together coordinate tRNA. The interval 184 to 225 (ALRMQPPKPEKPKPAAKAPEAQAPEAAPDARSALQKLADRFR) is disordered. The span at 198-210 (AAKAPEAQAPEAA) shows a compositional bias: low complexity.

The protein belongs to the PTH family. Monomer.

The protein localises to the cytoplasm. The enzyme catalyses an N-acyl-L-alpha-aminoacyl-tRNA + H2O = an N-acyl-L-amino acid + a tRNA + H(+). Functionally, hydrolyzes ribosome-free peptidyl-tRNAs (with 1 or more amino acids incorporated), which drop off the ribosome during protein synthesis, or as a result of ribosome stalling. Catalyzes the release of premature peptidyl moieties from peptidyl-tRNA molecules trapped in stalled 50S ribosomal subunits, and thus maintains levels of free tRNAs and 50S ribosomes. The polypeptide is Peptidyl-tRNA hydrolase (Cereibacter sphaeroides (strain KD131 / KCTC 12085) (Rhodobacter sphaeroides)).